Reading from the N-terminus, the 313-residue chain is Porphobilinogen deaminase (313 aa).

Cysteine 242 is modified (S-(dipyrrolylmethanemethyl)cysteine).

It belongs to the HMBS family. Monomer. Dipyrromethane is required as a cofactor.

The catalysed reaction is 4 porphobilinogen + H2O = hydroxymethylbilane + 4 NH4(+). It participates in porphyrin-containing compound metabolism; protoporphyrin-IX biosynthesis; coproporphyrinogen-III from 5-aminolevulinate: step 2/4. In terms of biological role, tetrapolymerization of the monopyrrole PBG into the hydroxymethylbilane pre-uroporphyrinogen in several discrete steps. The polypeptide is Porphobilinogen deaminase (Pseudomonas putida (strain GB-1)).